Consider the following 432-residue polypeptide: Glutamate-1-semialdehyde 2,1-aminomutase (432 aa).

An N6-(pyridoxal phosphate)lysine modification is found at Lys-272.

The protein belongs to the class-III pyridoxal-phosphate-dependent aminotransferase family. HemL subfamily. Homodimer. The cofactor is pyridoxal 5'-phosphate.

Its subcellular location is the cytoplasm. The enzyme catalyses (S)-4-amino-5-oxopentanoate = 5-aminolevulinate. Its pathway is porphyrin-containing compound metabolism; protoporphyrin-IX biosynthesis; 5-aminolevulinate from L-glutamyl-tRNA(Glu): step 2/2. It functions in the pathway porphyrin-containing compound metabolism; chlorophyll biosynthesis. The polypeptide is Glutamate-1-semialdehyde 2,1-aminomutase (Trichodesmium erythraeum (strain IMS101)).